A 361-amino-acid chain; its full sequence is DNA replication and repair protein RecF (361 aa).

Residue 30 to 37 (GDNAQGKT) coordinates ATP.

This sequence belongs to the RecF family.

The protein localises to the cytoplasm. The RecF protein is involved in DNA metabolism; it is required for DNA replication and normal SOS inducibility. RecF binds preferentially to single-stranded, linear DNA. It also seems to bind ATP. This Clostridium perfringens (strain ATCC 13124 / DSM 756 / JCM 1290 / NCIMB 6125 / NCTC 8237 / Type A) protein is DNA replication and repair protein RecF.